A 272-amino-acid chain; its full sequence is Type III pantothenate kinase (272 aa).

ATP is bound at residue 6–13; the sequence is DVRNTHTV. 109–112 serves as a coordination point for substrate; it reads GADR. Asp-111 (proton acceptor) is an active-site residue. Residue Asp-131 participates in K(+) binding. Position 134 (Ser-134) interacts with ATP. Substrate is bound at residue Thr-186.

It belongs to the type III pantothenate kinase family. In terms of assembly, homodimer. Requires NH4(+) as cofactor. It depends on K(+) as a cofactor.

It is found in the cytoplasm. It catalyses the reaction (R)-pantothenate + ATP = (R)-4'-phosphopantothenate + ADP + H(+). Its pathway is cofactor biosynthesis; coenzyme A biosynthesis; CoA from (R)-pantothenate: step 1/5. In terms of biological role, catalyzes the phosphorylation of pantothenate (Pan), the first step in CoA biosynthesis. In Mycobacterium marinum (strain ATCC BAA-535 / M), this protein is Type III pantothenate kinase.